The sequence spans 364 residues: Cobalt-precorrin-5B C(1)-methyltransferase (364 aa).

It belongs to the CbiD family.

It carries out the reaction Co-precorrin-5B + S-adenosyl-L-methionine = Co-precorrin-6A + S-adenosyl-L-homocysteine. It functions in the pathway cofactor biosynthesis; adenosylcobalamin biosynthesis; cob(II)yrinate a,c-diamide from sirohydrochlorin (anaerobic route): step 6/10. Catalyzes the methylation of C-1 in cobalt-precorrin-5B to form cobalt-precorrin-6A. This is Cobalt-precorrin-5B C(1)-methyltransferase from Pseudomonas putida (strain ATCC 47054 / DSM 6125 / CFBP 8728 / NCIMB 11950 / KT2440).